The primary structure comprises 116 residues: Putative iron-sulfur cluster insertion protein ErpA (116 aa).

The iron-sulfur cluster site is built by Cys44, Cys108, and Cys110.

This sequence belongs to the HesB/IscA family. In terms of assembly, homodimer. The cofactor is iron-sulfur cluster.

Required for insertion of 4Fe-4S clusters. In Thiobacillus denitrificans (strain ATCC 25259 / T1), this protein is Putative iron-sulfur cluster insertion protein ErpA.